Consider the following 444-residue polypeptide: 1,4-beta-D-glucan glucohydrolase (444 aa).

Glu-164 serves as the catalytic Proton donor. Glu-349 acts as the Nucleophile in catalysis.

The protein belongs to the glycosyl hydrolase 1 family. In terms of assembly, monomer.

It catalyses the reaction Hydrolysis of (1-&gt;4)-linkages in (1-&gt;4)-beta-D-glucans, to remove successive glucose units.. It carries out the reaction Hydrolysis of terminal, non-reducing beta-D-glucosyl residues with release of beta-D-glucose.. It participates in glycan metabolism; cellulose degradation. Its pathway is glycan metabolism; beta-D-glucan degradation. With respect to regulation, activated by glucose up to 200 mM when p-nitrophenyl-beta-glucoside is used as the substrate. This activation by end product concentrations may be due to a transglycosylation activity of the enzyme. Broad substrate specificity glycosidase. Releases glucose from soluble glucooligomers, with a preference for longer oligomers; acts more readily on cellotetraose than on cellobiose. Displays similar activities towards the disaccharides lactose and cellobiose. Is also able to hydrolyze various aryl-beta-glycosides in vitro. The protein is 1,4-beta-D-glucan glucohydrolase of Thermotoga neapolitana (strain ATCC 49049 / DSM 4359 / NBRC 107923 / NS-E).